The sequence spans 95 residues: Aspartyl/glutamyl-tRNA(Asn/Gln) amidotransferase subunit C (95 aa).

Belongs to the GatC family. As to quaternary structure, heterotrimer of A, B and C subunits.

It catalyses the reaction L-glutamyl-tRNA(Gln) + L-glutamine + ATP + H2O = L-glutaminyl-tRNA(Gln) + L-glutamate + ADP + phosphate + H(+). The catalysed reaction is L-aspartyl-tRNA(Asn) + L-glutamine + ATP + H2O = L-asparaginyl-tRNA(Asn) + L-glutamate + ADP + phosphate + 2 H(+). Its function is as follows. Allows the formation of correctly charged Asn-tRNA(Asn) or Gln-tRNA(Gln) through the transamidation of misacylated Asp-tRNA(Asn) or Glu-tRNA(Gln) in organisms which lack either or both of asparaginyl-tRNA or glutaminyl-tRNA synthetases. The reaction takes place in the presence of glutamine and ATP through an activated phospho-Asp-tRNA(Asn) or phospho-Glu-tRNA(Gln). This Chlorobaculum tepidum (strain ATCC 49652 / DSM 12025 / NBRC 103806 / TLS) (Chlorobium tepidum) protein is Aspartyl/glutamyl-tRNA(Asn/Gln) amidotransferase subunit C.